A 320-amino-acid chain; its full sequence is Pyrroline-5-carboxylate reductase 2 (320 aa).

S2 carries the post-translational modification N-acetylserine. NADP(+) is bound by residues 6-11 (IGAGQL) and S34. NADPH-binding residues include A8, Q10, L11, S34, E36, N56, V70, K71, and A97. NADP(+) contacts are provided by residues N56, 69 to 72 (AVKP), and 95 to 97 (CAA). E164 contributes to the L-proline binding site. An NADPH-binding site is contributed by N230. Residues A237 and T238 each coordinate L-proline. Over residues 295-305 (PTVSTLTPSSP) the composition is skewed to low complexity. Residues 295 to 320 (PTVSTLTPSSPGKLLTRSLALGGKKD) form a disordered region. Position 304 is a phosphoserine (S304).

It belongs to the pyrroline-5-carboxylate reductase family. As to quaternary structure, homodecamer; composed of 5 homodimers. Interacts with LTO1. As to expression, detected in erythrocytes (at protein level). Expressed in fetal brain.

It is found in the cytoplasm. Its subcellular location is the mitochondrion. The catalysed reaction is L-proline + NADP(+) = (S)-1-pyrroline-5-carboxylate + NADPH + 2 H(+). It carries out the reaction L-proline + NAD(+) = (S)-1-pyrroline-5-carboxylate + NADH + 2 H(+). It participates in amino-acid biosynthesis; L-proline biosynthesis; L-proline from L-glutamate 5-semialdehyde: step 1/1. With respect to regulation, subject to competitive inhibition by NADP. Was reported not to be inhibited by proline. However other study demonstrated an inhibition by proline. In terms of biological role, oxidoreductase that catalyzes the last step in proline biosynthesis, which corresponds to the reduction of pyrroline-5-carboxylate to L-proline using NAD(P)H. At physiologic concentrations, has higher specific activity in the presence of NADH. Involved in cellular response to oxidative stress. In some cell types, such as erythrocytes, its primary function may be the generation of NADP(+). The chain is Pyrroline-5-carboxylate reductase 2 from Homo sapiens (Human).